We begin with the raw amino-acid sequence, 474 residues long: Probable fucosyltransferase 9 (474 aa).

A helical; Signal-anchor for type II membrane protein membrane pass occupies residues 1-21 (MIKLTIAIATCLVLCLVLLLP). Topologically, residues 22–474 (SSNISYRHKY…LKLVDVSDEL (453 aa)) are lumenal. 3 N-linked (GlcNAc...) asparagine glycosylation sites follow: asparagine 24, asparagine 39, and asparagine 208.

The protein belongs to the glycosyltransferase 37 family. In terms of tissue distribution, expressed in leaves and stems.

Its subcellular location is the golgi apparatus. The protein localises to the golgi stack membrane. It functions in the pathway protein modification; protein glycosylation. In terms of biological role, may be involved in cell wall biosynthesis. May act as a fucosyltransferase. The sequence is that of Probable fucosyltransferase 9 (FUT9) from Arabidopsis thaliana (Mouse-ear cress).